Consider the following 492-residue polypeptide: Catalase (492 aa).

Catalysis depends on residues His-65 and Asn-138. Heme is bound at residue Tyr-348.

Belongs to the catalase family. Homotetramer. Heme is required as a cofactor.

It is found in the cytoplasm. Its subcellular location is the cytosol. The protein resides in the peroxisome matrix. It catalyses the reaction 2 H2O2 = O2 + 2 H2O. Functionally, catalyzes the degradation of hydrogen peroxide (H(2)O(2)) generated by peroxisomal oxidases to water and oxygen, thereby protecting cells from the toxic effects of hydrogen peroxide. In Vigna radiata var. radiata (Mung bean), this protein is Catalase.